The following is an 844-amino-acid chain: Janus kinase and microtubule-interacting protein 3 (844 aa).

Residues 8 to 258 (SRAKGDKAEA…QLSQVREADR (251 aa)) are a coiled coil. The interval 250 to 290 (LSQVREADRHPGSPRRELPHAAGAGDASDHSGSPEQQLDEK) is disordered. A compositionally biased stretch (basic and acidic residues) spans 254–268 (READRHPGSPRRELP). The span at 269-282 (HAAGAGDASDHSGS) shows a compositional bias: low complexity. Residues 289–421 (EKDARRFQLK…DELSKTLETA (133 aa)) adopt a coiled-coil conformation. Ser-384 carries the post-translational modification Phosphoserine. Over residues 466-483 (SDGSSVSYQTDRTDQTPC) the composition is skewed to polar residues. Positions 466–489 (SDGSSVSYQTDRTDQTPCTPDDDL) are disordered. Coiled-coil stretches lie at residues 493-621 (MAKE…RERK) and 683-834 (VLTL…FLFL).

It belongs to the JAKMIP family. Specifically expressed in the CNS and endocrine tissues. Also detected in other tissues including heart, testis and prostate.

The protein resides in the golgi apparatus. The chain is Janus kinase and microtubule-interacting protein 3 (JAKMIP3) from Homo sapiens (Human).